The primary structure comprises 332 residues: UPF0194 membrane protein YbhG (332 aa).

Positions 1–16 (MMKKPVVIGLAVVVLA) are cleaved as a signal peptide. Positions 108-209 (EEIAQAAAAV…LNLQDSTLIA (102 aa)) form a coiled coil.

Belongs to the UPF0194 family.

Its subcellular location is the periplasm. The polypeptide is UPF0194 membrane protein YbhG (Escherichia coli (strain 55989 / EAEC)).